The chain runs to 262 residues: Hemin import ATP-binding protein HmuV (262 aa).

In terms of domain architecture, ABC transporter spans 3-244 (LQARNLTLAR…DHMRRVYGIE (242 aa)). 35-42 (GANGAGKS) serves as a coordination point for ATP.

Belongs to the ABC transporter superfamily. Heme (hemin) importer (TC 3.A.1.14.5) family. In terms of assembly, the complex is composed of two ATP-binding proteins (HmuV), two transmembrane proteins (HmuU) and a solute-binding protein (HmuT).

It localises to the cell inner membrane. Part of the ABC transporter complex HmuTUV involved in hemin import. Responsible for energy coupling to the transport system. The protein is Hemin import ATP-binding protein HmuV of Bordetella parapertussis (strain 12822 / ATCC BAA-587 / NCTC 13253).